We begin with the raw amino-acid sequence, 235 residues long: Probable RNA 2'-phosphotransferase (235 aa).

It belongs to the KptA/TPT1 family.

Its function is as follows. Removes the 2'-phosphate from RNA via an intermediate in which the phosphate is ADP-ribosylated by NAD followed by a presumed transesterification to release the RNA and generate ADP-ribose 1''-2''-cyclic phosphate (APPR&gt;P). May function as an ADP-ribosylase. The chain is Probable RNA 2'-phosphotransferase from Thermoplasma volcanium (strain ATCC 51530 / DSM 4299 / JCM 9571 / NBRC 15438 / GSS1).